Here is a 213-residue protein sequence, read N- to C-terminus: Orotate phosphoribosyltransferase (213 aa).

Position 26 (Lys-26) interacts with 5-phospho-alpha-D-ribose 1-diphosphate. Phe-34 to Phe-35 is an orotate binding site. Residues Tyr-72–Lys-73, Arg-99, Lys-100, Lys-103, His-105, and Asp-124–Ala-132 each bind 5-phospho-alpha-D-ribose 1-diphosphate. Orotate-binding residues include Thr-128 and Arg-156.

The protein belongs to the purine/pyrimidine phosphoribosyltransferase family. PyrE subfamily. As to quaternary structure, homodimer. Requires Mg(2+) as cofactor.

The enzyme catalyses orotidine 5'-phosphate + diphosphate = orotate + 5-phospho-alpha-D-ribose 1-diphosphate. Its pathway is pyrimidine metabolism; UMP biosynthesis via de novo pathway; UMP from orotate: step 1/2. Catalyzes the transfer of a ribosyl phosphate group from 5-phosphoribose 1-diphosphate to orotate, leading to the formation of orotidine monophosphate (OMP). This is Orotate phosphoribosyltransferase from Saccharophagus degradans (strain 2-40 / ATCC 43961 / DSM 17024).